The chain runs to 419 residues: Serine/threonine-protein kinase Kist (419 aa).

Residues 23 to 304 (WQVQSRLGSG…AEMALCSPFF (282 aa)) enclose the Protein kinase domain. ATP-binding positions include 29 to 37 (LGSGSSASV) and K54. Residues D141 and D158 each act as proton acceptor in the active site. An RRM domain is found at 324–406 (RLLNVLDDDY…KFVVATFYPL (83 aa)).

The protein belongs to the protein kinase superfamily. Ser/Thr protein kinase family. Interacts with stathmin, PAM and CDKN1B/p27Kip1.

The protein localises to the nucleus. The catalysed reaction is L-seryl-[protein] + ATP = O-phospho-L-seryl-[protein] + ADP + H(+). The enzyme catalyses L-threonyl-[protein] + ATP = O-phospho-L-threonyl-[protein] + ADP + H(+). Its function is as follows. Upon serum stimulation, phosphorylates CDKN1B/p27Kip1, thus controlling CDKN1B subcellular location and cell cycle progression in G1 phase. May be involved in trafficking and/or processing of RNA. This is Serine/threonine-protein kinase Kist (UHMK1) from Pongo abelii (Sumatran orangutan).